The chain runs to 617 residues: Type VII secretion systems protein EssD (617 aa).

The disordered stretch occupies residues 420–448 (QNHVTHGPKDSMVRSEGKHSISSHEMNSS). Basic and acidic residues predominate over residues 426 to 438 (GPKDSMVRSEGKH).

It belongs to the EssD family. Interacts (via C-terminal) with EssG; this interaction blocks EssD activity. Interacts with EssE.

The protein resides in the secreted. Its subcellular location is the cell membrane. In terms of biological role, component of the type VII secretion system (Ess). Plays a role in Ess secretion during infection. Required for the efficient secretion of EsxA. Required for abscess formation and staphylococcal persistence in host tissue. Possesses a toxic DNase activity that is modulated by EssG by forming a nuclease toxin-antitoxin pair. This nuclease toxin targets competitor bacteria. This Staphylococcus aureus (strain Newman) protein is Type VII secretion systems protein EssD.